Reading from the N-terminus, the 923-residue chain is DNA mismatch repair protein PMS1 (923 aa).

Basic and acidic residues-rich tracts occupy residues 543-553, 565-581, and 591-601; these read DMTPSERDSEL, NVER…RFEE, and GDVERVSEDNP. A disordered region spans residues 543–603; that stretch reads DMTPSERDSE…ERVSEDNPRC (61 aa).

The protein belongs to the DNA mismatch repair MutL/HexB family. Heterodimer of MLH1 and PMS1, called MutLalpha, which is the major MMR MutL activity correcting base-base mismatches as well as IDLs. The heterodimer binds double strand DNA independently of a mismatch with positive cooperativity and has more than one DNA binding site. Forms a ternary complex with either the MSH2-MSH6 (MutSalpha) or the MSH2-MSH3 heterodimer (MutSbeta), which recognize and bind to mismatch DNA. Ternary complex formation is promoted by ATP binding. As to expression, expressed at very low levels in mature leaves. Detected in rapidly dividing tissues.

The protein localises to the nucleus. Functionally, required for DNA mismatch repair (MMR), correcting base-base mismatches and insertion-deletion loops (IDLs) resulting from DNA replication, DNA damage or from recombination events between non-identical sequences during meiosis. Component of the MutLalpha heterodimer that forms a ternary complex with the MutS heterodimers, which initially recognize the DNA mismatches. This complex is thought to be responsible for directing the downstream MMR events, including strand discrimination, excision, and resynthesis. Plays a major role in maintaining the genetic stability of simple sequence repeats and in the repair of heteroduplex sites present in meiotic recombination intermediates. Does not seem to be required for homologous somatic recombination. The sequence is that of DNA mismatch repair protein PMS1 (PMS1) from Arabidopsis thaliana (Mouse-ear cress).